Here is a 657-residue protein sequence, read N- to C-terminus: tRNA 5-methylaminomethyl-2-thiouridine biosynthesis bifunctional protein MnmC (657 aa).

Residues 1–233 (MPRGLILATP…KRDMTVAAFP (233 aa)) are tRNA (mnm(5)s(2)U34)-methyltransferase. The tract at residues 256–657 (LGAGLAGCSV…RALRHGKHAA (402 aa)) is FAD-dependent cmnm(5)s(2)U34 oxidoreductase.

It in the N-terminal section; belongs to the methyltransferase superfamily. tRNA (mnm(5)s(2)U34)-methyltransferase family. This sequence in the C-terminal section; belongs to the DAO family. Requires FAD as cofactor.

The protein localises to the cytoplasm. The enzyme catalyses 5-aminomethyl-2-thiouridine(34) in tRNA + S-adenosyl-L-methionine = 5-methylaminomethyl-2-thiouridine(34) in tRNA + S-adenosyl-L-homocysteine + H(+). In terms of biological role, catalyzes the last two steps in the biosynthesis of 5-methylaminomethyl-2-thiouridine (mnm(5)s(2)U) at the wobble position (U34) in tRNA. Catalyzes the FAD-dependent demodification of cmnm(5)s(2)U34 to nm(5)s(2)U34, followed by the transfer of a methyl group from S-adenosyl-L-methionine to nm(5)s(2)U34, to form mnm(5)s(2)U34. In Ralstonia nicotianae (strain ATCC BAA-1114 / GMI1000) (Ralstonia solanacearum), this protein is tRNA 5-methylaminomethyl-2-thiouridine biosynthesis bifunctional protein MnmC.